A 505-amino-acid polypeptide reads, in one-letter code: 2,3-bisphosphoglycerate-independent phosphoglycerate mutase (505 aa).

Mn(2+) is bound by residues aspartate 11 and serine 61. Serine 61 (phosphoserine intermediate) is an active-site residue. Residues histidine 122, 152 to 153 (RD), arginine 183, arginine 189, 259 to 262 (RTDR), and lysine 332 each bind substrate. Residues aspartate 399, histidine 403, aspartate 440, histidine 441, and histidine 458 each coordinate Mn(2+).

The protein belongs to the BPG-independent phosphoglycerate mutase family. In terms of assembly, monomer. Mn(2+) serves as cofactor.

It catalyses the reaction (2R)-2-phosphoglycerate = (2R)-3-phosphoglycerate. The protein operates within carbohydrate degradation; glycolysis; pyruvate from D-glyceraldehyde 3-phosphate: step 3/5. Its function is as follows. Catalyzes the interconversion of 2-phosphoglycerate and 3-phosphoglycerate. The sequence is that of 2,3-bisphosphoglycerate-independent phosphoglycerate mutase from Flavobacterium psychrophilum (strain ATCC 49511 / DSM 21280 / CIP 103535 / JIP02/86).